The chain runs to 274 residues: Bis(5'-nucleosyl)-tetraphosphatase, symmetrical (274 aa).

The protein belongs to the Ap4A hydrolase family.

It catalyses the reaction P(1),P(4)-bis(5'-adenosyl) tetraphosphate + H2O = 2 ADP + 2 H(+). Functionally, hydrolyzes diadenosine 5',5'''-P1,P4-tetraphosphate to yield ADP. This is Bis(5'-nucleosyl)-tetraphosphatase, symmetrical from Shewanella baltica (strain OS155 / ATCC BAA-1091).